The following is a 219-amino-acid chain: Probable cutinase 4 (219 aa).

The signal sequence occupies residues Met-1–Ala-17. Cystine bridges form between Cys-41–Cys-120 and Cys-67–Cys-81. Asn-99 carries N-linked (GlcNAc...) asparagine glycosylation. The active-site Nucleophile is Ser-131. Residues Cys-182 and Cys-189 are joined by a disulfide bond. Asp-186 is a catalytic residue. The Proton donor/acceptor role is filled by His-199.

Belongs to the cutinase family.

It localises to the secreted. The enzyme catalyses cutin + H2O = cutin monomers.. In terms of biological role, catalyzes the hydrolysis of complex carboxylic polyesters found in the cell wall of plants. Degrades cutin, a macromolecule that forms the structure of the plant cuticle. The polypeptide is Probable cutinase 4 (Aspergillus terreus (strain NIH 2624 / FGSC A1156)).